The sequence spans 56 residues: MAVQKSKKSRSRRGMRRSHDAVTPENLSVDPVSGETHRRHHITADGFYKGVKVIAV.

The span at 1-16 (MAVQKSKKSRSRRGMR) shows a compositional bias: basic residues. The interval 1 to 38 (MAVQKSKKSRSRRGMRRSHDAVTPENLSVDPVSGETHR) is disordered.

It belongs to the bacterial ribosomal protein bL32 family.

The polypeptide is Large ribosomal subunit protein bL32 (Colwellia psychrerythraea (strain 34H / ATCC BAA-681) (Vibrio psychroerythus)).